The sequence spans 1915 residues: Methylcytosine dioxygenase tet3-B (1915 aa).

The segment at 28-49 (RLRVSEMPSELNGGGDGSKGDG) is disordered. The CXXC-type zinc finger occupies 61 to 102 (SNKKRKRCGVCVPCLRKEPCGTCYNCVNRSTSHQICKMRKCE). C68, C71, C74, C80, C83, C86, C96, and C101 together coordinate Zn(2+). The segment covering 629–638 (PNSQQAPVSK) has biased composition (polar residues). Disordered stretches follow at residues 629–679 (PNSQ…RVKE), 776–806 (GRCP…VPGQ), and 831–880 (FSLP…LSNN). Positions 664–676 (KPPRKQVQIKKPR) are enriched in basic residues. Over residues 779 to 793 (PTPSTGDSSSGQGDS) the composition is skewed to low complexity. Polar residues-rich tracts occupy residues 838–854 (VPSQ…TSGV) and 864–880 (QLPS…LSNN). 5 residues coordinate Zn(2+): C974, C976, C1034, H1060, and C1062. 2-oxoglutarate is bound at residue R1102. C1112, C1114, C1130, C1139, and C1199 together coordinate Zn(2+). C1215 is a binding site for 2-oxoglutarate. H1221 serves as a coordination point for Zn(2+). H1223 and D1225 together coordinate Fe cation. 2-oxoglutarate is bound at residue H1257. Disordered regions lie at residues 1298-1356 (LSEP…QTKP), 1469-1516 (GMNQ…APME), and 1719-1753 (PAVN…VKEE). The segment covering 1308–1339 (RQLDAKKATAEKKKLQKEKLVSPDKTKQEPSD) has biased composition (basic and acidic residues). The segment covering 1340-1355 (TKTCQQNPGVPQQQTK) has biased composition (polar residues). Residues 1482–1491 (NYRRSSEVPH) show a composition bias toward basic and acidic residues. Polar residues-rich tracts occupy residues 1494-1503 (SLQNSNSQKS) and 1720-1732 (AVNS…SQNH). Residue H1794 coordinates Fe cation. Residue 1809-1811 (RIS) participates in 2-oxoglutarate binding. A coiled-coil region spans residues 1827-1860 (LALWEAKMKQLAERARVKEEEAAKLGIKQEVKSL).

It belongs to the TET family. The cofactor is Fe(2+). It depends on Zn(2+) as a cofactor. In terms of tissue distribution, detected in embryo (at protein level). Detected in embryonic head, in developing brain and eye.

The protein resides in the nucleus. It localises to the chromosome. It catalyses the reaction a 5-methyl-2'-deoxycytidine in DNA + 2-oxoglutarate + O2 = a 5-hydroxymethyl-2'-deoxycytidine in DNA + succinate + CO2. It carries out the reaction a 5-hydroxymethyl-2'-deoxycytidine in DNA + 2-oxoglutarate + O2 = a 5-formyl-2'-deoxycytidine in DNA + succinate + CO2 + H2O. The catalysed reaction is a 5-formyl-2'-deoxycytidine in DNA + 2-oxoglutarate + O2 = a 5-carboxyl-2'-deoxycytidine in DNA + succinate + CO2 + H(+). Functionally, dioxygenase that catalyzes the conversion of the modified genomic base 5-methylcytosine (5mC) into 5-hydroxymethylcytosine (5hmC) and plays a key role in epigenetic chromatin reprogramming during embryonic development. Conversion of 5mC into 5hmC probably constitutes the first step in cytosine demethylation. Selectively binds to the promoter region of target genes and contributes to regulate the expression of numerous developmental genes, including pax6, rax, sox9 and six3. May also contribute to the regulation of target genes in ways that do not require its enzyme activity. This chain is Methylcytosine dioxygenase tet3-B, found in Xenopus laevis (African clawed frog).